The primary structure comprises 399 residues: Beta-1,4-galactosyltransferase 1 (399 aa).

Over 1–24 (MRFREQFLGGSAAMPGATLQRACR) the chain is Cytoplasmic. Residues 25–44 (LLVAVCALHLGVTLVYYLSG) form a helical; Signal-anchor for type II membrane protein membrane-spanning segment. Residues 45-399 (RDLSRLPQLV…QITVDIGTPR (355 aa)) are Lumenal-facing. Positions 61–113 (QGGTNGAAASKQPPGEQRPRGARPPPPLGVSPKPRPGLDSSPGAASGPGLKSN) are disordered. A compositionally biased stretch (pro residues) spans 82–95 (ARPPPPLGVSPKPR). Residue N113 is glycosylated (N-linked (GlcNAc...) asparagine). C131 and C173 are joined by a disulfide. Residues 184–188 (PFRNR), 223–225 (FNR), 250–251 (VD), and W311 contribute to the UDP-alpha-D-galactose site. C244 and C263 are oxidised to a cystine. D251 provides a ligand contact to Mn(2+). An N-acetyl-D-glucosamine-binding site is contributed by 313–316 (GEDD). H344 provides a ligand contact to Mn(2+). Position 344–346 (344–346 (HSR)) interacts with UDP-alpha-D-galactose. R356 is an N-acetyl-D-glucosamine binding site.

The protein belongs to the glycosyltransferase 7 family. In terms of assembly, homodimer; and heterodimer with alpha-lactalbumin to form lactose synthase. Interacts (via N-terminal cytoplasmic domain) with UBE2Q1 (via N-terminus); the interaction is direct. Mn(2+) serves as cofactor. Post-translationally, the soluble form derives from the membrane forms by proteolytic processing.

It localises to the golgi apparatus. The protein resides in the golgi stack membrane. The protein localises to the cell membrane. It is found in the cell surface. Its subcellular location is the cell projection. It localises to the filopodium. The protein resides in the secreted. The catalysed reaction is D-glucose + UDP-alpha-D-galactose = lactose + UDP + H(+). It catalyses the reaction an N-acetyl-beta-D-glucosaminyl derivative + UDP-alpha-D-galactose = a beta-D-galactosyl-(1-&gt;4)-N-acetyl-beta-D-glucosaminyl derivative + UDP + H(+). It carries out the reaction N-acetyl-D-glucosamine + UDP-alpha-D-galactose = beta-D-galactosyl-(1-&gt;4)-N-acetyl-D-glucosamine + UDP + H(+). The enzyme catalyses a beta-D-GlcNAc-(1-&gt;3)-beta-D-Gal-(1-&gt;4)-beta-D-Glc-(1&lt;-&gt;1)-Cer(d18:1(4E)) + UDP-alpha-D-galactose = a neolactoside nLc4Cer(d18:1(4E)) + UDP + H(+). The catalysed reaction is a beta-D-glucosylceramide + UDP-alpha-D-galactose = a beta-D-galactosyl-(1-&gt;4)-beta-D-glucosyl-(1&lt;-&gt;1)-ceramide + UDP + H(+). It catalyses the reaction a neolactoside IV(3)-beta-GlcNAc-nLc4Cer + UDP-alpha-D-galactose = a neolactoside nLc6Cer + UDP + H(+). Its pathway is protein modification; protein glycosylation. Functionally, the Golgi complex form catalyzes the production of lactose in the lactating mammary gland and could also be responsible for the synthesis of complex-type N-linked oligosaccharides in many glycoproteins as well as the carbohydrate moieties of glycolipids. Its function is as follows. The cell surface form functions as a recognition molecule during a variety of cell to cell and cell to matrix interactions, as those occurring during development and egg fertilization, by binding to specific oligosaccharide ligands on opposing cells or in the extracellular matrix. The secreted form is responsible for the synthesis of complex-type to N-linked oligosaccharides in many glycoproteins as well as the carbohydrate moieties of glycolipids. The sequence is that of Beta-1,4-galactosyltransferase 1 from Mus musculus (Mouse).